The primary structure comprises 207 residues: ATP-dependent Clp protease proteolytic subunit (207 aa).

Residue S111 is the Nucleophile of the active site. The active site involves H136.

The protein belongs to the peptidase S14 family. As to quaternary structure, fourteen ClpP subunits assemble into 2 heptameric rings which stack back to back to give a disk-like structure with a central cavity, resembling the structure of eukaryotic proteasomes.

It is found in the cytoplasm. The enzyme catalyses Hydrolysis of proteins to small peptides in the presence of ATP and magnesium. alpha-casein is the usual test substrate. In the absence of ATP, only oligopeptides shorter than five residues are hydrolyzed (such as succinyl-Leu-Tyr-|-NHMec, and Leu-Tyr-Leu-|-Tyr-Trp, in which cleavage of the -Tyr-|-Leu- and -Tyr-|-Trp bonds also occurs).. Functionally, cleaves peptides in various proteins in a process that requires ATP hydrolysis. Has a chymotrypsin-like activity. Plays a major role in the degradation of misfolded proteins. The polypeptide is ATP-dependent Clp protease proteolytic subunit (Yersinia enterocolitica serotype O:8 / biotype 1B (strain NCTC 13174 / 8081)).